The primary structure comprises 630 residues: Chaperone protein DnaK (630 aa).

Thr197 carries the phosphothreonine; by autocatalysis modification. Positions 604 to 618 are enriched in polar residues; it reads KNNESVKNNESVKNN. Positions 604 to 630 are disordered; it reads KNNESVKNNESVKNNESVKDVDFEEIK. Residues 619 to 630 show a composition bias toward basic and acidic residues; that stretch reads ESVKDVDFEEIK.

This sequence belongs to the heat shock protein 70 family.

Functionally, acts as a chaperone. This chain is Chaperone protein DnaK, found in Karelsulcia muelleri (strain GWSS) (Sulcia muelleri).